Consider the following 244-residue polypeptide: Ribonuclease PH (244 aa).

Phosphate is bound by residues Arg-87 and 125-127 (GTR).

Belongs to the RNase PH family. In terms of assembly, homohexameric ring arranged as a trimer of dimers.

The enzyme catalyses tRNA(n+1) + phosphate = tRNA(n) + a ribonucleoside 5'-diphosphate. In terms of biological role, phosphorolytic 3'-5' exoribonuclease that plays an important role in tRNA 3'-end maturation. Removes nucleotide residues following the 3'-CCA terminus of tRNAs; can also add nucleotides to the ends of RNA molecules by using nucleoside diphosphates as substrates, but this may not be physiologically important. Probably plays a role in initiation of 16S rRNA degradation (leading to ribosome degradation) during starvation. In Synechococcus sp. (strain JA-2-3B'a(2-13)) (Cyanobacteria bacterium Yellowstone B-Prime), this protein is Ribonuclease PH.